A 478-amino-acid chain; its full sequence is RNA-binding protein 42 (478 aa).

Low complexity predominate over residues 1–20; sequence MASAMAGAGPAPGLPVAGGP. Residues 1–33 are disordered; that stretch reads MASAMAGAGPAPGLPVAGGPVVPGPGVGIPGKS. Ala-2 is modified (N-acetylalanine). Ser-133 is subject to Phosphoserine. Arg-151, Arg-156, Arg-166, and Arg-179 each carry asymmetric dimethylarginine. Disordered regions lie at residues 171-207 and 317-354; these read LSSA…MLPP and SLRP…PEKL. Over residues 193-205 the composition is skewed to pro residues; the sequence is PPLPGPPGPPMML. A necessary for interaction with HNRNPK region spans residues 234–478; that stretch reads ELGLGLGLGL…QKEKKKLGLR (245 aa). The segment covering 343 to 354 has biased composition (basic and acidic residues); sequence GEDKKKGKPEKL. The RRM domain maps to 379-457; the sequence is FRIFCGDLGN…RPIKLRKSMW (79 aa).

It belongs to the RRM RBM42 family. As to quaternary structure, interacts with HNRNPK. Expressed in cell lines (at protein level). Expressed in heart, brain, spleen, lung, liver, skeletal muscle, kidney and testis.

The protein resides in the nucleus. It is found in the cytoplasm. Functionally, binds (via the RRM domain) to the 3'-untranslated region (UTR) of CDKN1A mRNA. The protein is RNA-binding protein 42 (Rbm42) of Mus musculus (Mouse).